Reading from the N-terminus, the 525-residue chain is GMP synthase [glutamine-hydrolyzing] (525 aa).

One can recognise a Glutamine amidotransferase type-1 domain in the interval 9-207; sequence RILILDFGSQ…VLEISGCEAL (199 aa). The Nucleophile role is filled by Cys86. Active-site residues include His181 and Glu183. One can recognise a GMPS ATP-PPase domain in the interval 208 to 400; sequence WTPANIVEDA…LGLPYDMVYR (193 aa). 235-241 contributes to the ATP binding site; that stretch reads SGGVDSS.

In terms of assembly, homodimer.

The catalysed reaction is XMP + L-glutamine + ATP + H2O = GMP + L-glutamate + AMP + diphosphate + 2 H(+). It participates in purine metabolism; GMP biosynthesis; GMP from XMP (L-Gln route): step 1/1. In terms of biological role, catalyzes the synthesis of GMP from XMP. The polypeptide is GMP synthase [glutamine-hydrolyzing] (Ectopseudomonas mendocina (strain ymp) (Pseudomonas mendocina)).